Here is a 93-residue protein sequence, read N- to C-terminus: Large ribosomal subunit protein uL23 (93 aa).

The protein belongs to the universal ribosomal protein uL23 family. In terms of assembly, part of the 50S ribosomal subunit. Contacts protein L29, and trigger factor when it is bound to the ribosome.

Its function is as follows. One of the early assembly proteins it binds 23S rRNA. One of the proteins that surrounds the polypeptide exit tunnel on the outside of the ribosome. Forms the main docking site for trigger factor binding to the ribosome. The polypeptide is Large ribosomal subunit protein uL23 (Campylobacter lari (strain RM2100 / D67 / ATCC BAA-1060)).